The following is a 399-amino-acid chain: Tyrosine--tRNA ligase 2 (399 aa).

The 'HIGH' region motif lies at 43–52 (PTAPDLHLGH). Positions 227–231 (KMSKS) match the 'KMSKS' region motif. An ATP-binding site is contributed by K230. An S4 RNA-binding domain is found at 338–398 (ITLLDLCSVA…IGKRYKFRIG (61 aa)).

The protein belongs to the class-I aminoacyl-tRNA synthetase family. TyrS type 2 subfamily. Homodimer.

Its subcellular location is the cytoplasm. It catalyses the reaction tRNA(Tyr) + L-tyrosine + ATP = L-tyrosyl-tRNA(Tyr) + AMP + diphosphate + H(+). Its function is as follows. Catalyzes the attachment of tyrosine to tRNA(Tyr) in a two-step reaction: tyrosine is first activated by ATP to form Tyr-AMP and then transferred to the acceptor end of tRNA(Tyr). In Photorhabdus laumondii subsp. laumondii (strain DSM 15139 / CIP 105565 / TT01) (Photorhabdus luminescens subsp. laumondii), this protein is Tyrosine--tRNA ligase 2.